Here is a 397-residue protein sequence, read N- to C-terminus: Dual specificity mitogen-activated protein kinase kinase 4 (397 aa).

The tract at residues 1–38 (MAAPSPSGGGGSGGGGGTPGPIGPPASGHPAVSSMQGK) is disordered. A2 is modified (N-acetylalanine). Residues 7–20 (SGGGGSGGGGGTPG) are compositionally biased toward gly residues. The segment at 35–50 (MQGKRKALKLNFANPP) is d domain. An Asymmetric dimethylarginine; alternate modification is found at R56. R56 carries the omega-N-methylarginine; alternate modification. S88 is subject to Phosphoserine. The 267-residue stretch at 100 to 366 (LKDLGEIGRG…KELLKHPFIL (267 aa)) folds into the Protein kinase domain. ATP-binding positions include 106-114 (IGRGAYGSV) and K129. Residue D227 is the Proton acceptor of the active site. S255 carries the phosphoserine modification. T259 is subject to Phosphothreonine. The interval 362 to 385 (HPFILMYEERTVEVACYVCKILDQ) is DVD domain.

This sequence belongs to the protein kinase superfamily. STE Ser/Thr protein kinase family. MAP kinase kinase subfamily. In terms of assembly, interacts with SPAG9. Interacts (via its D domain) with its substrates MAPK8/JNK1, MAPK9/JNK2, MAPK10/JNK3, MAPK11 and MAPK14. Interacts (via its DVD domain) with MAP3Ks activators like MAP3K1/MEKK1 and MAP3K11/MLK3. Interacts with ARRB1, ARRB2 and MAPK8IP3/JIP3. In terms of processing, activated by phosphorylation on Ser-255 and Thr-259 by MAP kinase kinase kinases (MAP3Ks). Strong expression is detected in most of the central nervous system and in liver and thymus during early stages of development. While expression in nervous system increases over time, expression in fetal liver and thymus gradually decreases as embryogenesis proceeds. High level of expression in the central nervous system persists throughout postnatal development and remained at a stable level in adult brain.

It localises to the cytoplasm. The protein localises to the nucleus. It carries out the reaction L-seryl-[protein] + ATP = O-phospho-L-seryl-[protein] + ADP + H(+). It catalyses the reaction L-threonyl-[protein] + ATP = O-phospho-L-threonyl-[protein] + ADP + H(+). The enzyme catalyses L-tyrosyl-[protein] + ATP = O-phospho-L-tyrosyl-[protein] + ADP + H(+). Its activity is regulated as follows. Activated in response to a variety of cellular stresses, including UV and gamma-irradiation, heat shock, hyperosmolarity, T-cell receptor stimulation, peroxide and inflammatory cytokines. Also activated by developmental cues. MAP2K4/MKK4 is activated by the majority of MKKKs, such as MAP3K5/ASK1, MAP3K1/MEKK1, MAP3K7/TAK1, MAP3K10/MLK2, MAP3K11/MLK3, MAP3K12/DLK and MAP3K13/LZK. Functionally, dual specificity protein kinase which acts as an essential component of the MAP kinase signal transduction pathway. Essential component of the stress-activated protein kinase/c-Jun N-terminal kinase (SAP/JNK) signaling pathway. With MAP2K7/MKK7, is the one of the only known kinase to directly activate the stress-activated protein kinase/c-Jun N-terminal kinases MAPK8/JNK1, MAPK9/JNK2 and MAPK10/JNK3. MAP2K4/MKK4 and MAP2K7/MKK7 both activate the JNKs by phosphorylation, but they differ in their preference for the phosphorylation site in the Thr-Pro-Tyr motif. MAP2K4 shows preference for phosphorylation of the Tyr residue and MAP2K7/MKK7 for the Thr residue. The phosphorylation of the Thr residue by MAP2K7/MKK7 seems to be the prerequisite for JNK activation at least in response to pro-inflammatory cytokines, while other stimuli activate both MAP2K4/MKK4 and MAP2K7/MKK7 which synergistically phosphorylate JNKs. MAP2K4 is required for maintaining peripheral lymphoid homeostasis. The MKK/JNK signaling pathway is also involved in mitochondrial death signaling pathway, including the release cytochrome c, leading to apoptosis. Whereas MAP2K7/MKK7 exclusively activates JNKs, MAP2K4/MKK4 additionally activates the p38 MAPKs MAPK11, MAPK12, MAPK13 and MAPK14. This Mus musculus (Mouse) protein is Dual specificity mitogen-activated protein kinase kinase 4 (Map2k4).